The sequence spans 131 residues: Snaclec A13 (131 aa).

Cystine bridges form between C4/C15, C32/C125, and C100/C117. The C-type lectin domain occupies 11–126; the sequence is YEGHCYKVFN…CELAYHFICM (116 aa).

It belongs to the snaclec family. As to quaternary structure, heterodimer; disulfide-linked. As to expression, expressed by the venom gland.

It localises to the secreted. In terms of biological role, interferes with one step of hemostasis (modulation of platelet aggregation, or coagulation cascade, for example). The protein is Snaclec A13 of Macrovipera lebetinus (Levantine viper).